We begin with the raw amino-acid sequence, 511 residues long: MSVELWQQCVELLRDELPAQQFNTWIRPLQVEAEGDELRVYAPNRFVLDWVNEKYLGRLLELLGERGQGMAPALSLLIGSKRSSAPRAAPNAPLAAAASQALSGNSVSSVSASAPAMAVPAPMVAAPVPVHNVATHDEPSRDSFDPMAGASSQQAPARAEQRTVQVEGALKHTSYLNRTFTFENFVEGKSNQLARAAAWQVADNPKHGYNPLFLYGGVGLGKTHLMHAVGNHLLKKNPNAKVVYLHSERFVADMVKALQLNAINEFKRFYRSVDALLIDDIQFFARKERSQEEFFHTFNALLEGGQQVILTSDRYPKEIEGLEERLKSRFGWGLTVAVEPPELETRVAILMKKADQAKVDLPHDAAFFIAQRIRSNVRELEGALKRVIAHSHFMGRDITIELIRESLKDLLALQDKLVSVDNIQRTVAEYYKIKISDLLSKRRSRSVARPRQVAMALSKELTNHSLPEIGDVFGGRDHTTVLHACRKINELKESDADIREDYKNLLRTLTT.

A domain I, interacts with DnaA modulators region spans residues 1-87 (MSVELWQQCV…IGSKRSSAPR (87 aa)). The domain II stretch occupies residues 87-174 (RAAPNAPLAA…QVEGALKHTS (88 aa)). The tract at residues 133–160 (VATHDEPSRDSFDPMAGASSQQAPARAE) is disordered. A compositionally biased stretch (basic and acidic residues) spans 134–144 (ATHDEPSRDSF). The tract at residues 175 to 391 (YLNRTFTFEN…GALKRVIAHS (217 aa)) is domain III, AAA+ region. The ATP site is built by Gly219, Gly221, Lys222, and Thr223. The tract at residues 392-511 (HFMGRDITIE…YKNLLRTLTT (120 aa)) is domain IV, binds dsDNA.

It belongs to the DnaA family. In terms of assembly, oligomerizes as a right-handed, spiral filament on DNA at oriC.

It is found in the cytoplasm. In terms of biological role, plays an essential role in the initiation and regulation of chromosomal replication. ATP-DnaA binds to the origin of replication (oriC) to initiate formation of the DNA replication initiation complex once per cell cycle. Binds the DnaA box (a 9 base pair repeat at the origin) and separates the double-stranded (ds)DNA. Forms a right-handed helical filament on oriC DNA; dsDNA binds to the exterior of the filament while single-stranded (ss)DNA is stabiized in the filament's interior. The ATP-DnaA-oriC complex binds and stabilizes one strand of the AT-rich DNA unwinding element (DUE), permitting loading of DNA polymerase. After initiation quickly degrades to an ADP-DnaA complex that is not apt for DNA replication. Binds acidic phospholipids. This Pseudomonas syringae pv. tomato (strain ATCC BAA-871 / DC3000) protein is Chromosomal replication initiator protein DnaA.